The sequence spans 356 residues: Protein-glutamate methylesterase/protein-glutamine glutaminase (356 aa).

The region spanning 4–121 (KVLIVDDSAL…QSGMLEYTDL (118 aa)) is the Response regulatory domain. The residue at position 55 (Asp-55) is a 4-aspartylphosphate. Residues 156-349 (PLTSSEKLII…RRVLEFFAAH (194 aa)) form the CheB-type methylesterase domain. Active-site residues include Ser-169, His-195, and Asp-291.

Belongs to the CheB family. In terms of processing, phosphorylated by CheA. Phosphorylation of the N-terminal regulatory domain activates the methylesterase activity.

The protein localises to the cytoplasm. The enzyme catalyses [protein]-L-glutamate 5-O-methyl ester + H2O = L-glutamyl-[protein] + methanol + H(+). The catalysed reaction is L-glutaminyl-[protein] + H2O = L-glutamyl-[protein] + NH4(+). Its function is as follows. Involved in chemotaxis. Part of a chemotaxis signal transduction system that modulates chemotaxis in response to various stimuli. Catalyzes the demethylation of specific methylglutamate residues introduced into the chemoreceptors (methyl-accepting chemotaxis proteins or MCP) by CheR. Also mediates the irreversible deamidation of specific glutamine residues to glutamic acid. The chain is Protein-glutamate methylesterase/protein-glutamine glutaminase from Thiobacillus denitrificans (strain ATCC 25259 / T1).